The following is a 424-amino-acid chain: MHRLQVVLGHLAGRPESSSALQAAPCSARFPQASASDVVVVHGRRTPIGRASRGGFKNTTPDELLSAVLTAVLQDVRLKPEQLGDISVGNVLEPGAGAVMARIAQFLSGIPETVPLSTVNRQCSSGLQAVANIAGGIRNGSYDIGMACGVESMSLSGMGNPGNISSRLLESEKARDCLTPMGMTSENVAERFGISRQKQDDFALASQQKAASAQSRGCFRAEIVPVTTTVLDDKGDKKTITVSQDEGVRPSTTMQGLAKLKPAFKDGGSTTAGNSSQVSDGAAAVLLARRSKAEELGLPILGVLRSYAVVGVPPDVMGIGPAYAIPAALQKAGLTVNDIDIFEINEAFASQAVYCVEKLGIPAEKVNPLGGAIALGHPLGCTGARQVVTLLNELKRRGRRAYGVVSMCIGTGMGAAAVFEYPGN.

A peroxisome-targeting transit peptide spans 1–26 (MHRLQVVLGHLAGRPESSSALQAAPC). Residues 1 to 26 (MHRLQVVLGHLAGRPESSSALQAAPC) are PTS2-type peroxisomal targeting signal. Cys123 acts as the Acyl-thioester intermediate in catalysis. An N6-acetyllysine mark is found at Lys173 and Lys234. Active-site proton acceptor residues include His377 and Cys408.

It belongs to the thiolase-like superfamily. Thiolase family. Homodimer. Interacts (via PTS2-type peroxisomal targeting signal region) with PEX7; leading to its translocation into peroxisomes. As to expression, mainly expressed in liver and intestine.

Its subcellular location is the peroxisome. It carries out the reaction an acyl-CoA + acetyl-CoA = a 3-oxoacyl-CoA + CoA. The catalysed reaction is 2 acetyl-CoA = acetoacetyl-CoA + CoA. The enzyme catalyses tetradecanoyl-CoA + acetyl-CoA = 3-oxohexadecanoyl-CoA + CoA. It catalyses the reaction hexanoyl-CoA + acetyl-CoA = 3-oxooctanoyl-CoA + CoA. It carries out the reaction 3-oxohexadecanedioyl-CoA + CoA = tetradecanedioyl-CoA + acetyl-CoA. The catalysed reaction is 3-oxo-(6Z,9Z,12Z,15Z,18Z,21Z)-tetracosahexaenoyl-CoA + CoA = (4Z,7Z,10Z,13Z,16Z,19Z)-docosahexaenoyl-CoA + acetyl-CoA. Its pathway is lipid metabolism; peroxisomal fatty acid beta-oxidation. Responsible for the thiolytic cleavage of straight chain 3-keto fatty acyl-CoAs (3-oxoacyl-CoAs). Plays an important role in fatty acid peroxisomal beta-oxidation. Catalyzes the cleavage of short, medium, long, and very long straight chain 3-oxoacyl-CoAs. The sequence is that of 3-ketoacyl-CoA thiolase A, peroxisomal from Mus musculus (Mouse).